A 184-amino-acid chain; its full sequence is Crossover junction endodeoxyribonuclease RuvC (184 aa).

Residues D11, E73, and D147 contribute to the active site. Residues D11, E73, and D147 each coordinate Mg(2+).

Belongs to the RuvC family. In terms of assembly, homodimer which binds Holliday junction (HJ) DNA. The HJ becomes 2-fold symmetrical on binding to RuvC with unstacked arms; it has a different conformation from HJ DNA in complex with RuvA. In the full resolvosome a probable DNA-RuvA(4)-RuvB(12)-RuvC(2) complex forms which resolves the HJ. Mg(2+) serves as cofactor.

It localises to the cytoplasm. The catalysed reaction is Endonucleolytic cleavage at a junction such as a reciprocal single-stranded crossover between two homologous DNA duplexes (Holliday junction).. In terms of biological role, the RuvA-RuvB-RuvC complex processes Holliday junction (HJ) DNA during genetic recombination and DNA repair. Endonuclease that resolves HJ intermediates. Cleaves cruciform DNA by making single-stranded nicks across the HJ at symmetrical positions within the homologous arms, yielding a 5'-phosphate and a 3'-hydroxyl group; requires a central core of homology in the junction. The consensus cleavage sequence is 5'-(A/T)TT(C/G)-3'. Cleavage occurs on the 3'-side of the TT dinucleotide at the point of strand exchange. HJ branch migration catalyzed by RuvA-RuvB allows RuvC to scan DNA until it finds its consensus sequence, where it cleaves and resolves the cruciform DNA. The polypeptide is Crossover junction endodeoxyribonuclease RuvC (Neisseria gonorrhoeae (strain ATCC 700825 / FA 1090)).